A 233-amino-acid polypeptide reads, in one-letter code: Rab-like protein 3 (233 aa).

Residues 1 to 233 (MASLDRVKVL…RFNFKSLHSD (233 aa)) are small GTPase-like. GTP-binding positions include 16-21 (GVGKSS), 148-150 (KFD), and 179-180 (DC).

The protein belongs to the small GTPase superfamily. Rab family. As to quaternary structure, homodimer.

Functionally, required for KRAS signaling regulation and modulation of cell proliferation. Regulator of KRAS prenylation, and probably prenylation of other small GTPases. Required for lymphocyte development and function. Not required for myeloid cell development. The polypeptide is Rab-like protein 3 (rabl3) (Danio rerio (Zebrafish)).